A 329-amino-acid chain; its full sequence is UDP-N-acetylenolpyruvoylglucosamine reductase (329 aa).

The 165-residue stretch at 28-192 (RVGGPADLLC…ARVEVRLHAG (165 aa)) folds into the FAD-binding PCMH-type domain. Arg172 is a catalytic residue. The segment at 202–227 (REDRERRRATQPLDRPTFGSTFTNPP) is disordered. The Proton donor role is filled by Ser221. The active site involves Glu291. A disordered region spans residues 307-329 (DGHAAAGGGPGAASGGVRPPEAT). Positions 311–320 (AAGGGPGAAS) are enriched in gly residues.

This sequence belongs to the MurB family. The cofactor is FAD.

It localises to the cytoplasm. The catalysed reaction is UDP-N-acetyl-alpha-D-muramate + NADP(+) = UDP-N-acetyl-3-O-(1-carboxyvinyl)-alpha-D-glucosamine + NADPH + H(+). Its pathway is cell wall biogenesis; peptidoglycan biosynthesis. Cell wall formation. The polypeptide is UDP-N-acetylenolpyruvoylglucosamine reductase (Anaeromyxobacter sp. (strain K)).